A 218-amino-acid polypeptide reads, in one-letter code: Small ribosomal subunit protein uS3c (218 aa).

Positions 47 to 118 (VQNNIRISSG…KLNIAITRIS (72 aa)) constitute a KH type-2 domain.

Belongs to the universal ribosomal protein uS3 family. In terms of assembly, part of the 30S ribosomal subunit.

It localises to the plastid. It is found in the chloroplast. This chain is Small ribosomal subunit protein uS3c (rps3), found in Draba nemorosa (Woodland whitlowgrass).